Here is a 426-residue protein sequence, read N- to C-terminus: Enolase (426 aa).

Position 163 (Gln-163) interacts with (2R)-2-phosphoglycerate. Catalysis depends on Glu-205, which acts as the Proton donor. Residues Asp-242, Glu-286, and Asp-313 each coordinate Mg(2+). Positions 338, 367, 368, and 389 each coordinate (2R)-2-phosphoglycerate. The active-site Proton acceptor is Lys-338.

This sequence belongs to the enolase family. Mg(2+) serves as cofactor.

It localises to the cytoplasm. The protein resides in the secreted. The protein localises to the cell surface. The enzyme catalyses (2R)-2-phosphoglycerate = phosphoenolpyruvate + H2O. Its pathway is carbohydrate degradation; glycolysis; pyruvate from D-glyceraldehyde 3-phosphate: step 4/5. In terms of biological role, catalyzes the reversible conversion of 2-phosphoglycerate (2-PG) into phosphoenolpyruvate (PEP). It is essential for the degradation of carbohydrates via glycolysis. This chain is Enolase, found in Helicobacter acinonychis (strain Sheeba).